A 365-amino-acid polypeptide reads, in one-letter code: Aminomethyltransferase (365 aa).

It belongs to the GcvT family. As to quaternary structure, the glycine cleavage system is composed of four proteins: P, T, L and H.

It carries out the reaction N(6)-[(R)-S(8)-aminomethyldihydrolipoyl]-L-lysyl-[protein] + (6S)-5,6,7,8-tetrahydrofolate = N(6)-[(R)-dihydrolipoyl]-L-lysyl-[protein] + (6R)-5,10-methylene-5,6,7,8-tetrahydrofolate + NH4(+). Its function is as follows. The glycine cleavage system catalyzes the degradation of glycine. This Synechococcus sp. (strain CC9902) protein is Aminomethyltransferase.